The chain runs to 790 residues: MSHHSSPPPKHKGEHKGHGLPRGSERGSSSRDKDRSATTVSSSAPMPAGGKSSRTNCPPPAPPKTVNRLINEKSPYLLQHAYNPVDWYPWGQEAFDKAKKENKPIFLSVGYSTCHWCHMMEEESFQNEEIGRLLNENFICVMVDREERPDVDKVYMTFVQATSSGGGWPMNVWLTPGLQPFVGGTYFPPEDGLTRVGFRTVLMRICDQWKLNKNTLLENSQRVTTALLARSEISVGDRQIPASAATMNSRCFQQLDEGYDEEYGGFAEAPKFPTPVILNFLFSYWLSHRLTQDGSRAQQMALHTLKMMANGGIQDHVGQGFHRYSTDRQWHIPHFEKMLYDQAQLSVVYTQAFQISGDEFYADVAKGILQYVTRTLSHRSGGFYSAEDADSPPERGMKPQEGAYYVWTVKEVQQLLPEPVVGASEPLTSGQLLMKHYGLSEVGNINSSQDPNGELHGQNVLMVRYSLELTAARYGLEVEAVRALLNTGLEKLFQARKHRPKAHLDNKMLAAWNGLMVSGFAVTGAALGMEKLVAQATSGAKFLKRHMFDVSSGRLKRTCYAGTGGTVEQSNPPCWGFLEDYAFVVRGLLDLYEASQESSWLEWALRLQDTQDKLFWDPRGGGYFCSEAELGADLPLRLKDDQDGAEPSANSVSAHNLLRLHSFTGHKDWMDKCVCLLTAFSERMRRVPVALPEMVRTLSAQQQTLKQIVICGDPQAKDTKALLQCVHSIYVPNKVLILADGDPSSFLSRQLPFLSSLRRVEDRATVYIFENQACSMPITDPCELRKLLHQ.

The span at 1–19 (MSHHSSPPPKHKGEHKGHG) shows a compositional bias: basic residues. The segment at 1–67 (MSHHSSPPPK…PPPAPPKTVN (67 aa)) is disordered. Ser-5 carries the post-translational modification Phosphoserine. Positions 23-36 (GSERGSSSRDKDRS) are enriched in basic and acidic residues. Ser-653 is modified (phosphoserine).

Its subcellular location is the secreted. May play a role in fertility regulation. The protein is Spermatogenesis-associated protein 20 (Spata20) of Mus musculus (Mouse).